Consider the following 186-residue polypeptide: MNMKTLLALAVSAVCSVSVAQAHEHNTIPKGASIEVKVQQLDPVNGNKDVGTVTITESNYGLVFTPDLQGLSEGLHGFHIHENPSCEPKEKEGKLTAGLGAGGHWDPKGAKQHGYPWQDDAHLGDLPALTVLHDGTATNPVLAPRLKHLDDVRGHSIMIHTGGDNHSDHPAPLGGGGPRMACGVIK.

The signal sequence occupies residues 1 to 22 (MNMKTLLALAVSAVCSVSVAQA). Residues His-79, His-81, and His-104 each contribute to the Cu cation site. Cys-86 and Cys-182 are disulfide-bonded. The Zn(2+) site is built by His-104, His-113, His-122, and Asp-125. His-160 lines the Cu cation pocket.

Belongs to the Cu-Zn superoxide dismutase family. In terms of assembly, homodimer. Cu cation serves as cofactor. Requires Zn(2+) as cofactor.

Its subcellular location is the periplasm. It carries out the reaction 2 superoxide + 2 H(+) = H2O2 + O2. Its function is as follows. Destroys radicals which are normally produced within the cells and which are toxic to biological systems. The polypeptide is Superoxide dismutase [Cu-Zn] (sodC) (Neisseria meningitidis serogroup A / serotype 4A (strain DSM 15465 / Z2491)).